Reading from the N-terminus, the 80-residue chain is UPF0125 protein PD_1376 (80 aa).

The protein belongs to the UPF0125 (RnfH) family.

The protein is UPF0125 protein PD_1376 of Xylella fastidiosa (strain Temecula1 / ATCC 700964).